A 464-amino-acid chain; its full sequence is Growth hormone-releasing hormone receptor (464 aa).

Positions 1 to 22 are cleaved as a signal peptide; sequence MDSLLWATWVLCLLNLWGVALG. Topologically, residues 23–130 are extracellular; sequence HLHLECDFIT…EEKSYFSTVK (108 aa). Cystine bridges form between Cys41-Cys64, Cys55-Cys96, and Cys78-Cys112. Asn50 carries N-linked (GlcNAc...) asparagine glycosylation. The helical transmembrane segment at 131–151 threads the bilayer; sequence IIYTTGHSISIVALCVAIAIL. Topologically, residues 152–167 are cytoplasmic; the sequence is VALRRLHCPRNYIHTQ. A helical membrane pass occupies residues 168–188; sequence LFATFILKASAVFLKDAAVFQ. Over 189–210 the chain is Extracellular; the sequence is GDSTDHCSMSTILCKVSVAVSH. Residues 211–231 form a helical membrane-spanning segment; it reads FATMTNFSWLLAEAVYLSCLL. The Cytoplasmic segment spans residues 232-240; sequence ASTSPRSKP. The helical transmembrane segment at 241–261 threads the bilayer; the sequence is AFWWLVLAGWGLPVLCTGTWV. Residues 262 to 283 lie on the Extracellular side of the membrane; that stretch reads GCKLAFEDTACWDLDDSSPYWW. The chain crosses the membrane as a helical span at residues 284 to 304; it reads IIKGPIVLSVGVNFGLFLNII. Topologically, residues 305–372 are cytoplasmic; that stretch reads CILLRKLGPA…QLPWRLSKST (68 aa). Residues 373-393 traverse the membrane as a helical segment; it reads LLLIPLFGIHYIIFNFLPDSA. At 394–398 the chain is on the extracellular side; that stretch reads GLGIR. A helical membrane pass occupies residues 399–419; sequence LPLELGLGSFQGFVVAVLYCF. The Cytoplasmic portion of the chain corresponds to 420–464; it reads LNQEVRTEISRKWYGHDPELLPARRTCTEWTTPPRSRVKVLTSEC.

This sequence belongs to the G-protein coupled receptor 2 family. In terms of tissue distribution, pituitary gland.

The protein resides in the cell membrane. Its function is as follows. Receptor for GRF, coupled to G proteins which activate adenylyl cyclase. Stimulates somatotroph cell growth, growth hormone gene transcription and growth hormone secretion. The protein is Growth hormone-releasing hormone receptor (Ghrhr) of Rattus norvegicus (Rat).